A 323-amino-acid chain; its full sequence is Mas-related G-protein coupled receptor member X1 (323 aa).

At 1–30 (MDPTISSLSTESTTLNKTGHPSCRPILTLS) the chain is on the extracellular side. A glycan (N-linked (GlcNAc...) asparagine) is linked at N16. The helical transmembrane segment at 31–51 (FLVPIITLLGLAGNTIVLWLL) threads the bilayer. At 52–59 (GFRMRRKA) the chain is on the cytoplasmic side. A helical transmembrane segment spans residues 60-80 (ISVYVLNLSLADSFFLCCHFI). Over 81–100 (DSLMRIMNFYGIYAHKLSKE) the chain is Extracellular. Residues 101 to 121 (ILGNAAIIPYISGLSILSAIS) form a helical membrane-spanning segment. The Cytoplasmic segment spans residues 122-143 (TERCLSVLWPIWYHCHRPRNMS). The helical transmembrane segment at 144-164 (AIICVLIWVLSFLMGILDWFF) threads the bilayer. The Extracellular portion of the chain corresponds to 165-180 (SGFLGETHHHLWKNVD). Residues 181 to 201 (FIVTAFLIFLFMLLFGSSLAL) traverse the membrane as a helical segment. Residues 202–226 (LVRILCGSRRKPLSRLYVTISLTVM) lie on the Cytoplasmic side of the membrane. The chain crosses the membrane as a helical span at residues 227–247 (VYLICGLPLGLYLFLLYWFGI). The Extracellular portion of the chain corresponds to 248-258 (HLHYPFCHIYQ). Residues 259–279 (VTVLLSCVNSSANPIIYFLVG) traverse the membrane as a helical segment. Residues 280 to 323 (SFRHRKKHRSLKMVLKRALEETPEEDEYTDSHVQKPTEISERRC) lie on the Cytoplasmic side of the membrane.

This sequence belongs to the G-protein coupled receptor 1 family. Mas subfamily. As to expression, uniquely localized in a subset of small dorsal root and trigeminal sensory neurons. Associated preferentially with IB4 class of small-diameter somatosensory afferents (also known as nociceptors).

The protein resides in the cell membrane. Its function is as follows. Orphan receptor activated by neuropeptides terminating in Arg-Phe or Arg-Phe-amide. Mediates its action by association with G proteins that activate a phosphatidylinositol-calcium second messenger system. Its effect is mediated by G(q) and G(11) proteins. May regulate the function of nociceptive neurons by modulation of pain perception. In Rattus norvegicus (Rat), this protein is Mas-related G-protein coupled receptor member X1 (Mrgprx1).